We begin with the raw amino-acid sequence, 952 residues long: Bromodomain testis-specific protein (952 aa).

The Bromo 1 domain maps to 26-132 (RLTNQLQFLQ…KLFMQKLSQM (107 aa)). Residues 141–150 (GKERMKKDIQ) show a composition bias toward basic and acidic residues. Residues 141–168 (GKERMKKDIQQKTAVSSAKEQTPSKSAE) form a disordered region. Residues 151 to 167 (QKTAVSSAKEQTPSKSA) show a composition bias toward polar residues. S186 bears the Phosphoserine mark. Positions 208–219 (KGVKRRADTTTP) match the Nuclear localization signal motif. A disordered region spans residues 209–257 (GVKRRADTTTPTTSSAKASSESPPPLREAKPANAPVKENTVKSVLPDSQ). Residues 216–229 (TTTPTTSSAKASSE) show a composition bias toward low complexity. In terms of domain architecture, Bromo 2 spans 266-375 (VKVTEQLKHC…DVFEMHFAKI (110 aa)). Disordered regions lie at residues 392 to 420 (SAKA…ERVQ), 442 to 504 (VPLR…NAKP), 607 to 746 (QLNC…GCQV), and 850 to 930 (KHLE…RREA). Positions 417 to 442 (ERVQRLAKLQEQLNAVHQQLQVLSQV) form a coiled coil. A compositionally biased stretch (basic residues) spans 445-463 (RKLKKKNEKSKRAPKRKKV). The 83-residue stretch at 495–577 (KLEEEDNAKP…ACLRKRSLKP (83 aa)) folds into the NET domain. Basic residues predominate over residues 610–619 (CRKRQTKRPA). Residues 625–638 (PRPPLPPPPPPPPE) show a composition bias toward pro residues. Residues 646-681 (SDSSSSSSSSGSGSSSSSSSSSGSGSSSSDSSSSDS) show a composition bias toward low complexity. Polar residues predominate over residues 718-729 (SAETALVQQSTG). The stretch at 837–936 (EKEVKARTQE…RREAMAGTID (100 aa)) forms a coiled coil. A compositionally biased stretch (basic and acidic residues) spans 850–867 (KHLEHSAKDPKVSQESQR). Polar residues predominate over residues 874–883 (TPESSSNKVQ). The span at 893 to 902 (EQQQLPSPSE) shows a compositional bias: low complexity. Residues 911–930 (LLKDRNLAREKEQERRRREA) show a composition bias toward basic and acidic residues.

Belongs to the BET family. In terms of assembly, interacts with the acetylated N-terminus of histone H1, H2, H3 and H4. Interacts with P-TEFb components CDK9 and CCNT1/cyclin-T1. Interacts with mRNA splicing machinery proteins SRSF2, DDX5, HNRNPK and TARDBP. Interacts with SMARCE1. Post-translationally, ubiquitinated in a SPOP-dependent manner, leading to proteasomal degradation.

It is found in the nucleus. In terms of biological role, testis-specific chromatin protein that specifically binds histone H4 acetylated at 'Lys-5' and 'Lys-8' (H4K5ac and H4K8ac, respectively) and plays a key role in spermatogenesis. Required in late pachytene spermatocytes: plays a role in meiotic and post-meiotic cells by binding to acetylated histones at the promoter of specific meiotic and post-meiotic genes, facilitating their activation at the appropriate time. In the post-meiotic phase of spermatogenesis, binds to hyperacetylated histones and participates in their general removal from DNA. Also recognizes and binds a subset of butyrylated histones: able to bind histone H4 butyrylated at 'Lys-8' (H4K8ac), while it is not able to bind H4 butyrylated at 'Lys-5' (H4K5ac). Also acts as a component of the splicing machinery in pachytene spermatocytes and round spermatids and participates in 3'-UTR truncation of specific mRNAs in post-meiotic spermatids. Required for chromocenter organization, a structure comprised of peri-centromeric heterochromatin. In Rattus norvegicus (Rat), this protein is Bromodomain testis-specific protein (Brdt).